The following is a 218-amino-acid chain: Non-structural protein NS3 (218 aa).

This sequence belongs to the orbivirus NS3 family.

In terms of biological role, may play a role in the release of virions from infected cells. The sequence is that of Non-structural protein NS3 (Segment-10) from Camelus dromedarius (Dromedary).